The chain runs to 396 residues: Ribosomal RNA large subunit methyltransferase I (396 aa).

Residues 2–81 (SVRLVLAKGR…ESIDIAFFSR (80 aa)) enclose the PUA domain.

It belongs to the methyltransferase superfamily. RlmI family.

It is found in the cytoplasm. The catalysed reaction is cytidine(1962) in 23S rRNA + S-adenosyl-L-methionine = 5-methylcytidine(1962) in 23S rRNA + S-adenosyl-L-homocysteine + H(+). Its function is as follows. Specifically methylates the cytosine at position 1962 (m5C1962) of 23S rRNA. The chain is Ribosomal RNA large subunit methyltransferase I from Shigella flexneri serotype 5b (strain 8401).